The chain runs to 206 residues: ATP-dependent Clp protease proteolytic subunit (206 aa).

S101 (nucleophile) is an active-site residue. H126 is a catalytic residue.

This sequence belongs to the peptidase S14 family. As to quaternary structure, component of the chloroplastic Clp protease core complex.

Its subcellular location is the plastid. It localises to the chloroplast stroma. The catalysed reaction is Hydrolysis of proteins to small peptides in the presence of ATP and magnesium. alpha-casein is the usual test substrate. In the absence of ATP, only oligopeptides shorter than five residues are hydrolyzed (such as succinyl-Leu-Tyr-|-NHMec, and Leu-Tyr-Leu-|-Tyr-Trp, in which cleavage of the -Tyr-|-Leu- and -Tyr-|-Trp bonds also occurs).. In terms of biological role, cleaves peptides in various proteins in a process that requires ATP hydrolysis. Has a chymotrypsin-like activity. Plays a major role in the degradation of misfolded proteins. This Solanum lycopersicum (Tomato) protein is ATP-dependent Clp protease proteolytic subunit.